The primary structure comprises 436 residues: UPF0597 protein YhaM (436 aa).

It belongs to the UPF0597 family.

This Shigella boydii serotype 18 (strain CDC 3083-94 / BS512) protein is UPF0597 protein YhaM.